Reading from the N-terminus, the 414-residue chain is Gamma-glutamyl phosphate reductase (414 aa).

It belongs to the gamma-glutamyl phosphate reductase family.

The protein resides in the cytoplasm. The enzyme catalyses L-glutamate 5-semialdehyde + phosphate + NADP(+) = L-glutamyl 5-phosphate + NADPH + H(+). The protein operates within amino-acid biosynthesis; L-proline biosynthesis; L-glutamate 5-semialdehyde from L-glutamate: step 2/2. In terms of biological role, catalyzes the NADPH-dependent reduction of L-glutamate 5-phosphate into L-glutamate 5-semialdehyde and phosphate. The product spontaneously undergoes cyclization to form 1-pyrroline-5-carboxylate. This Clostridium beijerinckii (strain ATCC 51743 / NCIMB 8052) (Clostridium acetobutylicum) protein is Gamma-glutamyl phosphate reductase.